The following is a 538-amino-acid chain: tRNA-2-methylthio-N(6)-dimethylallyladenosine synthase (538 aa).

A disordered region spans residues 1-23 (MNEEQRLGRNGNTDAVSTKEAGS). The MTTase N-terminal domain occupies 95-213 (KKFLVRTYGC…LPHLLRNALF (119 aa)). [4Fe-4S] cluster is bound by residues Cys-104, Cys-140, Cys-174, Cys-250, Cys-254, and Cys-257. Positions 236 to 466 (REGKTQAWVN…NALVNDISAQ (231 aa)) constitute a Radical SAM core domain. The TRAM domain occupies 469 to 532 (LEYQDKVVEV…TWSLNGEMVE (64 aa)).

This sequence belongs to the methylthiotransferase family. MiaB subfamily. In terms of assembly, monomer. It depends on [4Fe-4S] cluster as a cofactor.

Its subcellular location is the cytoplasm. The enzyme catalyses N(6)-dimethylallyladenosine(37) in tRNA + (sulfur carrier)-SH + AH2 + 2 S-adenosyl-L-methionine = 2-methylsulfanyl-N(6)-dimethylallyladenosine(37) in tRNA + (sulfur carrier)-H + 5'-deoxyadenosine + L-methionine + A + S-adenosyl-L-homocysteine + 2 H(+). Catalyzes the methylthiolation of N6-(dimethylallyl)adenosine (i(6)A), leading to the formation of 2-methylthio-N6-(dimethylallyl)adenosine (ms(2)i(6)A) at position 37 in tRNAs that read codons beginning with uridine. The sequence is that of tRNA-2-methylthio-N(6)-dimethylallyladenosine synthase from Halalkalibacterium halodurans (strain ATCC BAA-125 / DSM 18197 / FERM 7344 / JCM 9153 / C-125) (Bacillus halodurans).